The sequence spans 106 residues: Ferredoxin (106 aa).

Positions 8 and 16 each coordinate [3Fe-4S] cluster. [4Fe-4S] cluster is bound by residues cysteine 20, cysteine 39, cysteine 42, and cysteine 45. The 4Fe-4S ferredoxin-type domain maps to 30-59; sequence RMLYIHPDECVDCGACEPVCPVEAIYYEDD. Residue cysteine 49 participates in [3Fe-4S] cluster binding. Residues 81–106 are disordered; that stretch reads PGGASKVGQTDNDPQAIKDLPPQGED.

It depends on [4Fe-4S] cluster as a cofactor. The cofactor is [3Fe-4S] cluster.

In terms of biological role, ferredoxins are iron-sulfur proteins that transfer electrons in a wide variety of metabolic reactions. The sequence is that of Ferredoxin (fdxA) from Mycolicibacterium smegmatis (Mycobacterium smegmatis).